A 299-amino-acid chain; its full sequence is Oxygen-dependent coproporphyrinogen-III oxidase (299 aa).

Serine 92 is a binding site for substrate. Histidine 96 and histidine 106 together coordinate Mn(2+). Histidine 106 acts as the Proton donor in catalysis. Residue 108 to 110 (NVR) participates in substrate binding. Mn(2+) is bound by residues histidine 145 and histidine 175. The segment at 240 to 275 (YVEFNLVWDRGTLFGLQTGGRTESILMSMPPLVRWE) is important for dimerization. Substrate is bound at residue 258 to 260 (GGR).

It belongs to the aerobic coproporphyrinogen-III oxidase family. In terms of assembly, homodimer. Requires Mn(2+) as cofactor.

The protein localises to the cytoplasm. It catalyses the reaction coproporphyrinogen III + O2 + 2 H(+) = protoporphyrinogen IX + 2 CO2 + 2 H2O. It participates in porphyrin-containing compound metabolism; protoporphyrin-IX biosynthesis; protoporphyrinogen-IX from coproporphyrinogen-III (O2 route): step 1/1. Involved in the heme biosynthesis. Catalyzes the aerobic oxidative decarboxylation of propionate groups of rings A and B of coproporphyrinogen-III to yield the vinyl groups in protoporphyrinogen-IX. The protein is Oxygen-dependent coproporphyrinogen-III oxidase of Escherichia coli O157:H7.